The following is a 219-amino-acid chain: Uracil-DNA glycosylase (219 aa).

The active-site Proton acceptor is the D59.

The protein belongs to the uracil-DNA glycosylase (UDG) superfamily. UNG family.

It localises to the cytoplasm. It carries out the reaction Hydrolyzes single-stranded DNA or mismatched double-stranded DNA and polynucleotides, releasing free uracil.. Excises uracil residues from the DNA which can arise as a result of misincorporation of dUMP residues by DNA polymerase or due to deamination of cytosine. This Macrococcus caseolyticus (strain JCSC5402) (Macrococcoides caseolyticum) protein is Uracil-DNA glycosylase.